A 322-amino-acid polypeptide reads, in one-letter code: Ferredoxin--NADP reductase (322 aa).

FAD contacts are provided by aspartate 34, glutamine 42, tyrosine 47, valine 87, phenylalanine 120, aspartate 279, and threonine 320.

The protein belongs to the ferredoxin--NADP reductase type 2 family. As to quaternary structure, homodimer. FAD is required as a cofactor.

The enzyme catalyses 2 reduced [2Fe-2S]-[ferredoxin] + NADP(+) + H(+) = 2 oxidized [2Fe-2S]-[ferredoxin] + NADPH. The polypeptide is Ferredoxin--NADP reductase (Streptococcus pneumoniae serotype 2 (strain D39 / NCTC 7466)).